We begin with the raw amino-acid sequence, 957 residues long: ERC protein 2 (957 aa).

Positions 1–13 (MYGSARTISNPEG) are enriched in polar residues. A disordered region spans residues 1-44 (MYGSARTISNPEGSPSRSPRLPRSPRLGHRRTSSGGGGGTGKTL). Over residues 14-25 (SPSRSPRLPRSP) the composition is skewed to low complexity. Residues serine 65 and serine 666 each carry the phosphoserine modification. The stretch at 140-917 (RQVRDSTMLD…RMKLMADNYD (778 aa)) forms a coiled coil. An involved in binding to RIMS1 region spans residues 760-957 (DQNKKVANLK…DQDDEEGIWA (198 aa)). The tract at residues 918–957 (DDHHHYHHHHHHHHHRSPGRSQHSNHRPSPDQDDEEGIWA) is disordered. Over residues 922–943 (HYHHHHHHHHHRSPGRSQHSNH) the composition is skewed to basic residues. The segment covering 948-957 (DQDDEEGIWA) has biased composition (acidic residues).

In terms of assembly, interacts with BSN, ERC1, PPFIA1, PPFIA2, PPFIA3 and PPFIA4. Interacts through its C-terminus with the PDZ domain of RIMS1. Part of a complex consisting of ERC2, RIMS1 and UNC13A. As to expression, predominantly expressed in brain, including hippocampus, cortex, cerebellum, amygdala and olfactory bulb.

The protein resides in the cytoplasm. Its subcellular location is the synapse. It localises to the presynaptic active zone. The protein localises to the cytoskeleton. In terms of biological role, thought to be involved in the organization of the cytomatrix at the nerve terminals active zone (CAZ) which regulates neurotransmitter release. Seems to act together with BSN. May recruit liprin-alpha proteins to the CAZ. The protein is ERC protein 2 (Erc2) of Rattus norvegicus (Rat).